A 231-amino-acid polypeptide reads, in one-letter code: Platelet-activating factor acetylhydrolase IB subunit alpha1 (231 aa).

At Ser-2 the chain carries N-acetylserine. Ser-2 carries the post-translational modification Phosphoserine. Catalysis depends on residues Ser-47, Asp-192, and His-195.

It belongs to the 'GDSL' lipolytic enzyme family. Platelet-activating factor acetylhydrolase IB beta/gamma subunits subfamily. Forms a catalytic dimer which is either homodimer (alpha1/alpha1 homodimer) or heterodimer with PAFAH1B2 (alpha1/alpha2 heterodimer). Component of the cytosolic (PAF-AH (I)) heterotetrameric enzyme, which is composed of PAFAH1B1 (beta), PAFAH1B2 (alpha2) and PAFAH1B3 (alpha1) subunits. The catalytic activity of the enzyme resides in the alpha1 (PAFAH1B3) and alpha2 (PAFAH1B2) subunits, whereas the beta subunit (PAFAH1B1) has regulatory activity. Trimer formation is not essential for the catalytic activity. Interacts with VLDLR; this interaction may modulate the Reelin pathway. In terms of tissue distribution, in the adult, expressed in brain, skeletal muscle, kidney, thymus, spleen, colon, testis, ovary and peripheral blood leukocytes. In the fetus, highest expression occurs in brain.

It is found in the cytoplasm. It carries out the reaction a 1-O-alkyl-2-acetyl-sn-glycero-3-phosphocholine + H2O = a 1-O-alkyl-sn-glycero-3-phosphocholine + acetate + H(+). The enzyme catalyses 1-O-hexadecyl-2-acetyl-sn-glycero-3-phosphocholine + H2O = 1-O-hexadecyl-sn-glycero-3-phosphocholine + acetate + H(+). The catalysed reaction is 1-O-hexadecyl-2-acetyl-sn-glycero-3-phosphate + H2O = 1-O-hexadecyl-sn-glycero-3-phosphate + acetate + H(+). With respect to regulation, beta subunit (PAFAH1B1) inhibits the acetylhydrolase activity of the alpha1/alpha1 catalytic homodimer. In terms of biological role, alpha1 catalytic subunit of the cytosolic type I platelet-activating factor (PAF) acetylhydrolase (PAF-AH (I)) heterotetrameric enzyme that catalyzes the hydrolyze of the acetyl group at the sn-2 position of PAF and its analogs and modulates the action of PAF. The activity and substrate specificity of PAF-AH (I) are affected by its subunit composition. Both alpha1/alpha1 homodimer (PAFAH1B3/PAFAH1B3 homodimer) and alpha1/alpha2 heterodimer(PAFAH1B3/PAFAH1B2 heterodimer) hydrolyze 1-O-alkyl-2-acetyl-sn-glycero-3-phosphoric acid (AAGPA) more efficiently than PAF, but they have little hydrolytic activity towards 1-O-alkyl-2-acetyl-sn-glycero-3-phosphorylethanolamine (AAGPE). Plays an important role during the development of brain. This is Platelet-activating factor acetylhydrolase IB subunit alpha1 from Homo sapiens (Human).